The primary structure comprises 437 residues: Adenosylhomocysteinase (437 aa).

The substrate site is built by Thr58, Asp133, and Glu158. Thr159–Thr161 is a binding site for NAD(+). Lys188 and Asp192 together coordinate substrate. Residues Asn193, Gly224–Gly229, Glu245, Val301–His303, and Asn348 each bind NAD(+).

It belongs to the adenosylhomocysteinase family. Homotetramer. NAD(+) is required as a cofactor.

It catalyses the reaction S-adenosyl-L-homocysteine + H2O = L-homocysteine + adenosine. It participates in amino-acid biosynthesis; L-homocysteine biosynthesis; L-homocysteine from S-adenosyl-L-homocysteine: step 1/1. In terms of biological role, adenosylhomocysteine is a competitive inhibitor of S-adenosyl-L-methionine-dependent methyl transferase reactions; therefore adenosylhomocysteinase may play a key role in the control of methylations via regulation of the intracellular concentration of adenosylhomocysteine. This chain is Adenosylhomocysteinase (ahcy-1), found in Caenorhabditis elegans.